A 253-amino-acid polypeptide reads, in one-letter code: Probable transcriptional regulatory protein RAF_ORF0717 (253 aa).

Residues 1 to 21 (MAGHSKFKNIQHRKGAQDKKR) are disordered.

The protein belongs to the TACO1 family.

The protein resides in the cytoplasm. In Rickettsia africae (strain ESF-5), this protein is Probable transcriptional regulatory protein RAF_ORF0717.